Consider the following 957-residue polypeptide: ERC protein 2 (957 aa).

Over residues 1–13 the composition is skewed to polar residues; the sequence is MYGSARTISNPEG. Positions 1–44 are disordered; it reads MYGSARTISNPEGSPSRSPRLPRSPRLGHRRTSSGGGGGTGKTL. Positions 14–25 are enriched in low complexity; sequence SPSRSPRLPRSP. Phosphoserine is present on residues S65 and S666. Positions 140–917 form a coiled coil; sequence RQVRDSTMLD…RMKLMADNYD (778 aa). An involved in binding to RIMS1 region spans residues 760 to 957; the sequence is DQNKKVANLK…DQDDEEGIWA (198 aa). The segment at 918 to 957 is disordered; sequence DDHHHYHHHHHHHHHRSPGRSQHSNHRPSPDQDDEEGIWA. Residues 922–943 are compositionally biased toward basic residues; it reads HYHHHHHHHHHRSPGRSQHSNH. A compositionally biased stretch (acidic residues) spans 948-957; sequence DQDDEEGIWA.

Interacts with BSN, ERC1, PPFIA1, PPFIA2, PPFIA3 and PPFIA4. Interacts through its C-terminus with the PDZ domain of RIMS1. Part of a complex consisting of ERC2, RIMS1 and UNC13A. Predominantly expressed in brain, including hippocampus, cortex, cerebellum, amygdala and olfactory bulb.

The protein resides in the cytoplasm. Its subcellular location is the synapse. It localises to the presynaptic active zone. The protein localises to the cytoskeleton. Thought to be involved in the organization of the cytomatrix at the nerve terminals active zone (CAZ) which regulates neurotransmitter release. Seems to act together with BSN. May recruit liprin-alpha proteins to the CAZ. The polypeptide is ERC protein 2 (Erc2) (Rattus norvegicus (Rat)).